The following is a 115-amino-acid chain: Large ribosomal subunit protein bL20 (115 aa).

The protein belongs to the bacterial ribosomal protein bL20 family.

Its function is as follows. Binds directly to 23S ribosomal RNA and is necessary for the in vitro assembly process of the 50S ribosomal subunit. It is not involved in the protein synthesizing functions of that subunit. In Microcystis aeruginosa (strain NIES-843 / IAM M-2473), this protein is Large ribosomal subunit protein bL20.